The chain runs to 77 residues: Large ribosomal subunit protein uL24 (77 aa).

Belongs to the universal ribosomal protein uL24 family. In terms of assembly, part of the 50S ribosomal subunit.

Its function is as follows. One of two assembly initiator proteins, it binds directly to the 5'-end of the 23S rRNA, where it nucleates assembly of the 50S subunit. One of the proteins that surrounds the polypeptide exit tunnel on the outside of the subunit. This Campylobacter fetus subsp. fetus (strain 82-40) protein is Large ribosomal subunit protein uL24.